Reading from the N-terminus, the 154-residue chain is Transcriptional repressor NrdR (154 aa).

Residues 3 to 34 fold into a zinc finger; it reads CPFCGANDTKVIDSRLVAEGEQVRRRRECLAC. Residues 49–139 form the ATP-cone domain; sequence PRLIKQDGSR…VYRRFQDLNE (91 aa).

It belongs to the NrdR family. Requires Zn(2+) as cofactor.

In terms of biological role, negatively regulates transcription of bacterial ribonucleotide reductase nrd genes and operons by binding to NrdR-boxes. The sequence is that of Transcriptional repressor NrdR from Pseudomonas savastanoi pv. phaseolicola (strain 1448A / Race 6) (Pseudomonas syringae pv. phaseolicola (strain 1448A / Race 6)).